The sequence spans 429 residues: Patatin-like phospholipase domain-containing protein 5 (429 aa).

Positions 12-181 (LSFSGAGYLG…SNNLPFADCP (170 aa)) constitute a PNPLA domain. Residues 16–21 (GAGYLG) carry the GXGXXG motif. The short motif at 47–51 (GSSSG) is the GXSXG element. The active-site Nucleophile is the S49. D168 (proton acceptor) is an active-site residue. A DGA/G motif is present at residues 168-170 (DGA).

Expressed in brain and pituitary gland.

The catalysed reaction is a triacylglycerol + H2O = a diacylglycerol + a fatty acid + H(+). Its function is as follows. Has abundant triacylglycerol lipase activity. This Homo sapiens (Human) protein is Patatin-like phospholipase domain-containing protein 5.